Here is a 92-residue protein sequence, read N- to C-terminus: FMRFamide-like neuropeptides 5 (92 aa).

A propeptide spanning residues 1–41 (MSSRSTTIAFLFIATLLVFQCVSAQSSAEDADYLEKYQRIA) is cleaved from the precursor. Residues Phe-51 and Phe-61 each carry the phenylalanine amide modification. Residues 64–82 (SRNTWEDGYASPSVNELYV) constitute a propeptide that is removed on maturation. A Phenylalanine amide modification is found at Phe-91.

Belongs to the FARP (FMRFamide related peptide) family. As to expression, each flp gene is expressed in a distinct set of neurons. Flp-5 is expressed in the ASE sensory neurons, the 14 and M4 cholinergic pharyngeal motoneurons, and the PVT and RMG neurons. It is weakly expressed in the PB and 12 neurons. Also expressed in pharyngeal muscle.

It is found in the secreted. Its function is as follows. FMRFamides and FMRFamide-like peptides are neuropeptides. GAKFIRF-amide has an excitatory effect on dissected pharyngeal myogenic muscle system. The sequence is that of FMRFamide-like neuropeptides 5 from Caenorhabditis elegans.